A 129-amino-acid chain; its full sequence is Large ribosomal subunit protein bL21 (129 aa).

Residues 100-129 (DGAKPSKKAAEKKAPKAAPKKAAAKAESAE) are disordered.

The protein belongs to the bacterial ribosomal protein bL21 family. As to quaternary structure, part of the 50S ribosomal subunit. Contacts protein L20.

This protein binds to 23S rRNA in the presence of protein L20. The sequence is that of Large ribosomal subunit protein bL21 from Brucella anthropi (strain ATCC 49188 / DSM 6882 / CCUG 24695 / JCM 21032 / LMG 3331 / NBRC 15819 / NCTC 12168 / Alc 37) (Ochrobactrum anthropi).